We begin with the raw amino-acid sequence, 270 residues long: uncharacterized protein (270 aa).

The signal sequence occupies residues 1-23 (MFNFITFILFAVVCISYCHKSRG). N-linked (GlcNAc...) asparagine glycosylation is found at Asn246 and Asn252.

It is found in the secreted. This is an uncharacterized protein from Caenorhabditis elegans.